The chain runs to 92 residues: Small ribosomal subunit protein uS19 (92 aa).

This sequence belongs to the universal ribosomal protein uS19 family.

Functionally, protein S19 forms a complex with S13 that binds strongly to the 16S ribosomal RNA. The chain is Small ribosomal subunit protein uS19 from Rhodopseudomonas palustris (strain BisA53).